The sequence spans 349 residues: Quinone oxidoreductase-like protein 2 (349 aa).

K35 carries the post-translational modification N6-acetyllysine. N6-succinyllysine is present on K200.

The protein belongs to the zinc-containing alcohol dehydrogenase family. Quinone oxidoreductase subfamily.

The sequence is that of Quinone oxidoreductase-like protein 2 from Bos taurus (Bovine).